The following is a 51-amino-acid chain: UPF0391 membrane protein Psyc_0130 (51 aa).

The next 2 helical transmembrane spans lie at 6 to 26 (IIFA…VAGL) and 28 to 47 (ANFA…VAFV).

The protein belongs to the UPF0391 family.

The protein resides in the cell membrane. The protein is UPF0391 membrane protein Psyc_0130 of Psychrobacter arcticus (strain DSM 17307 / VKM B-2377 / 273-4).